Here is a 453-residue protein sequence, read N- to C-terminus: Probable glycine dehydrogenase (decarboxylating) subunit 1 (453 aa).

This sequence belongs to the GcvP family. N-terminal subunit subfamily. As to quaternary structure, the glycine cleavage system is composed of four proteins: P, T, L and H. In this organism, the P 'protein' is a heterodimer of two subunits.

It catalyses the reaction N(6)-[(R)-lipoyl]-L-lysyl-[glycine-cleavage complex H protein] + glycine + H(+) = N(6)-[(R)-S(8)-aminomethyldihydrolipoyl]-L-lysyl-[glycine-cleavage complex H protein] + CO2. In terms of biological role, the glycine cleavage system catalyzes the degradation of glycine. The P protein binds the alpha-amino group of glycine through its pyridoxal phosphate cofactor; CO(2) is released and the remaining methylamine moiety is then transferred to the lipoamide cofactor of the H protein. The chain is Probable glycine dehydrogenase (decarboxylating) subunit 1 from Methylococcus capsulatus (strain ATCC 33009 / NCIMB 11132 / Bath).